Consider the following 528-residue polypeptide: Na(+)/H(+) antiporter NhaB (528 aa).

A run of 11 helical transmembrane segments spans residues 23–43 (VAII…DPFV), 45–65 (GWLL…CYPL), 90–110 (LVAN…IYFM), 136–156 (CFAA…AVVI), 204–224 (LLMH…VGEP), 242–262 (IRMA…CAIV), 305–325 (GLIA…VGLI), 350–370 (EEAL…AVII), 392–412 (LALF…VFVG), 450–470 (ATPN…APLI), and 479–499 (IMAL…IMFF).

The protein belongs to the NhaB Na(+)/H(+) (TC 2.A.34) antiporter family.

It is found in the cell inner membrane. It catalyses the reaction 2 Na(+)(in) + 3 H(+)(out) = 2 Na(+)(out) + 3 H(+)(in). Its function is as follows. Na(+)/H(+) antiporter that extrudes sodium in exchange for external protons. In Vibrio campbellii (strain ATCC BAA-1116), this protein is Na(+)/H(+) antiporter NhaB.